Here is a 1109-residue protein sequence, read N- to C-terminus: Hybrid signal transduction histidine kinase F (1109 aa).

The region spanning 237–289 (LSTETTITKKNGEKYPAEVFVKEISDIHSNSIGIMIIVRDITDQIRLKEMNIE) is the PAC domain. A Histidine kinase domain is found at 324–547 (TISHEIRTPL…LFSVTLNFEQ (224 aa)). Histidine 327 carries the post-translational modification Phosphohistidine; by autocatalysis. A coiled-coil region spans residues 719–760 (SNLIQTISQIDNQQQQQQQQLQQQEQEQQHQQQQLQQEQQFV). Over residues 739–758 (LQQQEQEQQHQQQQLQQEQQ) the composition is skewed to low complexity. The tract at residues 739 to 819 (LQQQEQEQQH…TSSDSGESDE (81 aa)) is disordered. A compositionally biased stretch (basic and acidic residues) spans 767-782 (DSSEKKTTPKKDRGKY). Positions 928-1048 (RILLVDDNAV…PLGELVKKYL (121 aa)) constitute a Response regulatory domain. Aspartate 977 carries the 4-aspartylphosphate modification. Low complexity predominate over residues 1052-1099 (NNNNNNNNNNNNNNNNNSNNNNSNSNSNPNSNSNSNSNSNSNPNQNPN). Positions 1052–1109 (NNNNNNNNNNNNNNNNNSNNNNSNSNSNPNSNSNSNSNSNSNPNQNPNYCNNLPTDFI) are disordered. Residues 1100–1109 (YCNNLPTDFI) show a composition bias toward polar residues.

The enzyme catalyses ATP + protein L-histidine = ADP + protein N-phospho-L-histidine.. Its function is as follows. Acts as a receptor histidine kinase for a signal transduction pathway. This protein undergoes an ATP-dependent autophosphorylation at a conserved histidine residue in the kinase core, and a phosphoryl group is then transferred to a conserved aspartate residue in the receiver domain. This is Hybrid signal transduction histidine kinase F (dhkF) from Dictyostelium discoideum (Social amoeba).